A 173-amino-acid polypeptide reads, in one-letter code: Shikimate kinase 1 (173 aa).

14 to 19 (GAGKST) is an ATP binding site. S18 contributes to the Mg(2+) binding site. Substrate contacts are provided by D36, R60, and G82. R120 lines the ATP pocket. R140 contacts substrate. Q157 lines the ATP pocket.

This sequence belongs to the shikimate kinase family. In terms of assembly, monomer. The cofactor is Mg(2+).

It is found in the cytoplasm. The enzyme catalyses shikimate + ATP = 3-phosphoshikimate + ADP + H(+). It participates in metabolic intermediate biosynthesis; chorismate biosynthesis; chorismate from D-erythrose 4-phosphate and phosphoenolpyruvate: step 5/7. In terms of biological role, catalyzes the specific phosphorylation of the 3-hydroxyl group of shikimic acid using ATP as a cosubstrate. This is Shikimate kinase 1 from Erwinia tasmaniensis (strain DSM 17950 / CFBP 7177 / CIP 109463 / NCPPB 4357 / Et1/99).